Here is a 627-residue protein sequence, read N- to C-terminus: BEL1-like homeodomain protein 4 (627 aa).

Positions 206–225 are disordered; that stretch reads SSQHHHHQVVGHFGSSSSSP. A compositionally biased stretch (low complexity) spans 215-225; it reads VGHFGSSSSSP. Residues 241-257 form an SR/KY domain region; the sequence is SKYTKPAQELLEEFCSV. Residues 263 to 307 form a disordered region; it reads KKNKLSRNNSNPNTTGGGGGGGSSSSAGTANDSPPLSPADRIEHQ. The interval 302 to 373 is BELL domain; that stretch reads DRIEHQRRKV…CLKDAVAVQL (72 aa). Residues 424-486 constitute a DNA-binding region (homeobox); that stretch reads AWRPQRGLPE…NARVRLWKPM (63 aa). Residues 494–530 form a disordered region; the sequence is EAKEREEAEEENENQQQQRRQQQTNNNDTKPNNNENN. Residues 507 to 530 are compositionally biased toward low complexity; it reads NQQQQRRQQQTNNNDTKPNNNENN.

Belongs to the TALE/BELL homeobox family. In terms of assembly, may form heterodimeric complexes with TALE/KNOX proteins. Interacts with OFP1, OFP2 and OFP5. Interacts with KNATM, isoform KNATM-B. In terms of tissue distribution, expressed in lateral organs.

The protein localises to the nucleus. Its function is as follows. Transcription factor that establishes leaf shape by repressing growth in specific subdomains of the leaf. Negatively regulates knox homeobox gene KNAT1/BP expression. This chain is BEL1-like homeodomain protein 4 (BLH4), found in Arabidopsis thaliana (Mouse-ear cress).